A 502-amino-acid polypeptide reads, in one-letter code: ATP synthase subunit alpha, chloroplastic (502 aa).

Position 170–177 (170–177 (GDRQTGKT)) interacts with ATP.

It belongs to the ATPase alpha/beta chains family. F-type ATPases have 2 components, CF(1) - the catalytic core - and CF(0) - the membrane proton channel. CF(1) has five subunits: alpha(3), beta(3), gamma(1), delta(1), epsilon(1). CF(0) has four main subunits: a, b, b' and c.

The protein resides in the plastid. The protein localises to the chloroplast thylakoid membrane. The enzyme catalyses ATP + H2O + 4 H(+)(in) = ADP + phosphate + 5 H(+)(out). In terms of biological role, produces ATP from ADP in the presence of a proton gradient across the membrane. The alpha chain is a regulatory subunit. This chain is ATP synthase subunit alpha, chloroplastic, found in Tupiella akineta (Green alga).